Here is a 443-residue protein sequence, read N- to C-terminus: Probable D-serine dehydratase (443 aa).

At Lys116 the chain carries N6-(pyridoxal phosphate)lysine.

The protein belongs to the serine/threonine dehydratase family. DsdA subfamily. It depends on pyridoxal 5'-phosphate as a cofactor.

The enzyme catalyses D-serine = pyruvate + NH4(+). The sequence is that of Probable D-serine dehydratase from Bacillus cereus (strain B4264).